Here is a 684-residue protein sequence, read N- to C-terminus: Pseudohemocyanin-1 (684 aa).

An N-terminal signal peptide occupies residues 1–23; that stretch reads SLVVAAAAASPYSGSHDFSGFQR. Positions 7–32 are disordered; it reads AAASPYSGSHDFSGFQRDEPDGVPTA. Residues Asn-100, Asn-193, Asn-230, and Asn-626 are each glycosylated (N-linked (GlcNAc...) asparagine).

This sequence belongs to the tyrosinase family. Hemocyanin subfamily. As to quaternary structure, hexamer. Strongly expressed in ovaries. Also expressed in heart. Not detected in hepatopancreas, gills, connective tissue or muscle.

Functionally, does not function as a hemocyanin. This chain is Pseudohemocyanin-1, found in Homarus americanus (American lobster).